The chain runs to 1111 residues: Lysylphosphatidylglycerol biosynthesis bifunctional protein LysX (1111 aa).

The interval 1-612 (MTLTSPPRTR…VLHHDGTAPD (612 aa)) is phosphatidylglycerol lysyltransferase. Transmembrane regions (helical) follow at residues 18-38 (VPAAAGWTVGVIATLSLIASV), 60-80 (FPDTSFAWAFVLALLAGALAA), 84-104 (IAWWILLLYMVAAVGWNVADL), 118-138 (VIGLAFHLAAVAFLLLARPLF), 152-172 (GVLAAGMAVGVLVGWGLLELF), 209-229 (VNALLGLFGALALMAAAIVLF), and 308-328 (AWLALCGTYGWAPGVMGASVG). A lysine--tRNA ligase region spans residues 613–1111 (MSGLRTDTAD…TLPFPLARPR (499 aa)). The segment at residues 674-747 (VAGRVLRIRD…GTRSLLVRHW (74 aa)) is a DNA-binding region (OB). 2 residues coordinate Mg(2+): D1023 and E1030.

It in the N-terminal section; belongs to the LPG synthetase family. In the C-terminal section; belongs to the class-II aminoacyl-tRNA synthetase family. It depends on Mg(2+) as a cofactor.

It is found in the cell membrane. The enzyme catalyses tRNA(Lys) + L-lysine + ATP = L-lysyl-tRNA(Lys) + AMP + diphosphate. It catalyses the reaction L-lysyl-tRNA(Lys) + a 1,2-diacyl-sn-glycero-3-phospho-(1'-sn-glycerol) = a 1,2-diacyl-sn-glycero-3-phospho-1'-(3'-O-L-lysyl)-sn-glycerol + tRNA(Lys). Functionally, catalyzes the production of L-lysyl-tRNA(Lys)transfer and the transfer of a lysyl group from L-lysyl-tRNA(Lys) to membrane-bound phosphatidylglycerol (PG), which produces lysylphosphatidylglycerol (LPG), one of the components of the bacterial membrane with a positive net charge. LPG synthesis contributes to the resistance to cationic antimicrobial peptides (CAMPs) and likely protects M.tuberculosis against the CAMPs produced by competiting microorganisms (bacteriocins). In fact, the modification of anionic phosphatidylglycerol with positively charged L-lysine results in repulsion of the peptides. This chain is Lysylphosphatidylglycerol biosynthesis bifunctional protein LysX (lysX), found in Mycobacterium sp. (strain JLS).